A 424-amino-acid polypeptide reads, in one-letter code: Imidazolonepropionase (424 aa).

Fe(3+)-binding residues include His81 and His83. The Zn(2+) site is built by His81 and His83. Residues Arg90, Tyr153, and His186 each coordinate 4-imidazolone-5-propanoate. Residue Tyr153 coordinates N-formimidoyl-L-glutamate. His251 contributes to the Fe(3+) binding site. His251 is a Zn(2+) binding site. Residue Glu254 coordinates 4-imidazolone-5-propanoate. Asp325 contacts Fe(3+). Position 325 (Asp325) interacts with Zn(2+). N-formimidoyl-L-glutamate-binding residues include Asn327 and Gly329. Residue Thr330 coordinates 4-imidazolone-5-propanoate.

The protein belongs to the metallo-dependent hydrolases superfamily. HutI family. Zn(2+) serves as cofactor. Fe(3+) is required as a cofactor.

Its subcellular location is the cytoplasm. The enzyme catalyses 4-imidazolone-5-propanoate + H2O = N-formimidoyl-L-glutamate. It functions in the pathway amino-acid degradation; L-histidine degradation into L-glutamate; N-formimidoyl-L-glutamate from L-histidine: step 3/3. In terms of biological role, catalyzes the hydrolytic cleavage of the carbon-nitrogen bond in imidazolone-5-propanoate to yield N-formimidoyl-L-glutamate. It is the third step in the universal histidine degradation pathway. The protein is Imidazolonepropionase of Syntrophobacter fumaroxidans (strain DSM 10017 / MPOB).